A 551-amino-acid polypeptide reads, in one-letter code: Cilia- and flagella-associated protein 45 (551 aa).

Disordered stretches follow at residues 1 to 52 (MPLR…KSDS), 232 to 256 (MEID…ERVR), and 385 to 415 (EQDA…KKIE). The segment covering 8–18 (ASSSASTASNR) has biased composition (low complexity). Residues 276–524 (AEHREQEKEQ…EDIKKQKLEE (249 aa)) adopt a coiled-coil conformation. Basic and acidic residues predominate over residues 387–415 (DALRAKRNQEVADREWRRKEKENAQKKIE).

Belongs to the CFAP45 family. Microtubule inner protein component of sperm flagellar doublet microtubules. Interacts with AK8; dimerization with AK8 may create a cavity at the interface of the dimer that can accommodate AMP. Interacts with CFAP52. Interacts with ENKUR. Directly interacts with DNALI1. Interacts with DNAH11. Interacts with DNAI1. Expressed in respiratory cells and in sperm (at protein level).

The protein resides in the cytoplasm. It localises to the cytoskeleton. Its subcellular location is the cilium axoneme. The protein localises to the flagellum axoneme. It is found in the cell projection. The protein resides in the cilium. It localises to the flagellum. Its function is as follows. Microtubule inner protein (MIP) part of the dynein-decorated doublet microtubules (DMTs) in cilia axoneme, which is required for motile cilia beating. It is an AMP-binding protein that may facilitate dynein ATPase-dependent ciliary and flagellar beating via adenine nucleotide homeostasis. May function as a donor of AMP to AK8 and hence promote ADP production. This Mus musculus (Mouse) protein is Cilia- and flagella-associated protein 45 (Cfap45).